Consider the following 184-residue polypeptide: ATP synthase subunit b (184 aa).

The helical transmembrane segment at 25–45 (IFPSWPIMLATLVSFTILLVV) threads the bilayer.

The protein belongs to the ATPase B chain family. As to quaternary structure, F-type ATPases have 2 components, F(1) - the catalytic core - and F(0) - the membrane proton channel. F(1) has five subunits: alpha(3), beta(3), gamma(1), delta(1), epsilon(1). F(0) has three main subunits: a(1), b(2) and c(10-14). The alpha and beta chains form an alternating ring which encloses part of the gamma chain. F(1) is attached to F(0) by a central stalk formed by the gamma and epsilon chains, while a peripheral stalk is formed by the delta and b chains.

It is found in the cell membrane. Functionally, f(1)F(0) ATP synthase produces ATP from ADP in the presence of a proton or sodium gradient. F-type ATPases consist of two structural domains, F(1) containing the extramembraneous catalytic core and F(0) containing the membrane proton channel, linked together by a central stalk and a peripheral stalk. During catalysis, ATP synthesis in the catalytic domain of F(1) is coupled via a rotary mechanism of the central stalk subunits to proton translocation. In terms of biological role, component of the F(0) channel, it forms part of the peripheral stalk, linking F(1) to F(0). This is ATP synthase subunit b from Mycoplasma mobile (strain ATCC 43663 / 163K / NCTC 11711) (Mesomycoplasma mobile).